The primary structure comprises 426 residues: D-tagatose-1,6-bisphosphate aldolase subunit KbaZ (426 aa).

Belongs to the GatZ/KbaZ family. KbaZ subfamily. In terms of assembly, forms a complex with KbaY.

It participates in carbohydrate metabolism; D-tagatose 6-phosphate degradation; D-glyceraldehyde 3-phosphate and glycerone phosphate from D-tagatose 6-phosphate: step 2/2. In terms of biological role, component of the tagatose-1,6-bisphosphate aldolase KbaYZ that is required for full activity and stability of the Y subunit. Could have a chaperone-like function for the proper and stable folding of KbaY. When expressed alone, KbaZ does not show any aldolase activity. The polypeptide is D-tagatose-1,6-bisphosphate aldolase subunit KbaZ (Escherichia coli (strain ATCC 8739 / DSM 1576 / NBRC 3972 / NCIMB 8545 / WDCM 00012 / Crooks)).